We begin with the raw amino-acid sequence, 165 residues long: Chorismate pyruvate-lyase (165 aa).

Substrate-binding residues include Met-35, Arg-77, Leu-115, and Glu-156.

It belongs to the UbiC family. In terms of assembly, monomer.

It localises to the cytoplasm. It catalyses the reaction chorismate = 4-hydroxybenzoate + pyruvate. It functions in the pathway cofactor biosynthesis; ubiquinone biosynthesis. Functionally, removes the pyruvyl group from chorismate, with concomitant aromatization of the ring, to provide 4-hydroxybenzoate (4HB) for the ubiquinone pathway. This chain is Chorismate pyruvate-lyase, found in Escherichia coli O127:H6 (strain E2348/69 / EPEC).